The chain runs to 499 residues: Apolipoprotein N-acyltransferase (499 aa).

The next 6 helical transmembrane spans lie at Phe-18–Thr-38, Leu-50–Ile-70, Ile-82–Leu-102, Phe-105–Ile-125, Pro-156–Leu-176, and Ser-182–Phe-202. Residues Ile-217–Ser-461 form the CN hydrolase domain. The active-site Proton acceptor is Glu-257. Lys-320 is an active-site residue. The Nucleophile role is filled by Cys-372. A helical transmembrane segment spans residues Leu-476 to Phe-496.

It belongs to the CN hydrolase family. Apolipoprotein N-acyltransferase subfamily.

It localises to the cell membrane. The enzyme catalyses N-terminal S-1,2-diacyl-sn-glyceryl-L-cysteinyl-[lipoprotein] + a glycerophospholipid = N-acyl-S-1,2-diacyl-sn-glyceryl-L-cysteinyl-[lipoprotein] + a 2-acyl-sn-glycero-3-phospholipid + H(+). It participates in protein modification; lipoprotein biosynthesis (N-acyl transfer). Functionally, catalyzes the phospholipid dependent N-acylation of the N-terminal cysteine of apolipoprotein, the last step in lipoprotein maturation. This chain is Apolipoprotein N-acyltransferase, found in Wigglesworthia glossinidia brevipalpis.